Here is a 672-residue protein sequence, read N- to C-terminus: DNA ligase (672 aa).

Residues 35–39, 84–85, and E115 each bind NAD(+); these read DAQYD and SL. The active-site N6-AMP-lysine intermediate is the K117. R138, E178, K294, and K318 together coordinate NAD(+). Zn(2+) is bound by residues C412, C415, C430, and C435. A BRCT domain is found at 592–672; the sequence is ATGGPFVGKS…AFLQMLQTNA (81 aa).

Belongs to the NAD-dependent DNA ligase family. LigA subfamily. Mg(2+) is required as a cofactor. The cofactor is Mn(2+).

The enzyme catalyses NAD(+) + (deoxyribonucleotide)n-3'-hydroxyl + 5'-phospho-(deoxyribonucleotide)m = (deoxyribonucleotide)n+m + AMP + beta-nicotinamide D-nucleotide.. In terms of biological role, DNA ligase that catalyzes the formation of phosphodiester linkages between 5'-phosphoryl and 3'-hydroxyl groups in double-stranded DNA using NAD as a coenzyme and as the energy source for the reaction. It is essential for DNA replication and repair of damaged DNA. This Myxococcus xanthus (strain DK1622) protein is DNA ligase.